The sequence spans 235 residues: Chaperone protein TorD (235 aa).

The protein belongs to the TorD/DmsD family. TorD subfamily.

Its subcellular location is the cytoplasm. Its function is as follows. Involved in the biogenesis of TorA. Acts on TorA before the insertion of the molybdenum cofactor and, as a result, probably favors a conformation of the apoenzyme that is competent for acquiring the cofactor. This is Chaperone protein TorD from Shewanella amazonensis (strain ATCC BAA-1098 / SB2B).